Here is a 201-residue protein sequence, read N- to C-terminus: Ribosome maturation factor RimP (201 aa).

The protein belongs to the RimP family.

The protein resides in the cytoplasm. Its function is as follows. Required for maturation of 30S ribosomal subunits. This Rhizobium johnstonii (strain DSM 114642 / LMG 32736 / 3841) (Rhizobium leguminosarum bv. viciae) protein is Ribosome maturation factor RimP.